Reading from the N-terminus, the 347-residue chain is Protein RecA (347 aa).

68–75 (GPESSGKT) is a binding site for ATP.

Belongs to the RecA family.

Its subcellular location is the cytoplasm. In terms of biological role, can catalyze the hydrolysis of ATP in the presence of single-stranded DNA, the ATP-dependent uptake of single-stranded DNA by duplex DNA, and the ATP-dependent hybridization of homologous single-stranded DNAs. It interacts with LexA causing its activation and leading to its autocatalytic cleavage. This is Protein RecA from Mycobacterium sp. (strain JLS).